We begin with the raw amino-acid sequence, 126 residues long: Phosphoribosyl-AMP cyclohydrolase (126 aa).

Mg(2+) is bound at residue D76. C77 serves as a coordination point for Zn(2+). Mg(2+)-binding residues include D78 and D80. Residues C94 and C101 each coordinate Zn(2+).

Belongs to the PRA-CH family. In terms of assembly, homodimer. Mg(2+) is required as a cofactor. Zn(2+) serves as cofactor.

It is found in the cytoplasm. It carries out the reaction 1-(5-phospho-beta-D-ribosyl)-5'-AMP + H2O = 1-(5-phospho-beta-D-ribosyl)-5-[(5-phospho-beta-D-ribosylamino)methylideneamino]imidazole-4-carboxamide. The protein operates within amino-acid biosynthesis; L-histidine biosynthesis; L-histidine from 5-phospho-alpha-D-ribose 1-diphosphate: step 3/9. Its function is as follows. Catalyzes the hydrolysis of the adenine ring of phosphoribosyl-AMP. The sequence is that of Phosphoribosyl-AMP cyclohydrolase from Nitratidesulfovibrio vulgaris (strain ATCC 29579 / DSM 644 / CCUG 34227 / NCIMB 8303 / VKM B-1760 / Hildenborough) (Desulfovibrio vulgaris).